A 69-amino-acid chain; its full sequence is Large ribosomal subunit protein uL29 (69 aa).

Belongs to the universal ribosomal protein uL29 family.

The chain is Large ribosomal subunit protein uL29 from Oenococcus oeni (strain ATCC BAA-331 / PSU-1).